Consider the following 893-residue polypeptide: MMMNSMIRQGWQQVLRRFSIPTSGDRLIVSNSTDQPIGLFGAFDTSLQTLSQVTNDPEVLKQKSNIPTHLDVASVLEASPRSFPWVFLTNSFCTFGGSIHAQNLQAFATAEFKSGFCYMNLLIPLSFDIIDAHADSFRGFVEQLPDTLGAYPSLSMVLNVMLHAATRFPEIVASPIPTIAFDAESLQFHVTDKRGVPGMWNILKACRVYELLSLAADGIGCEYMLYPVGAAPQYSFWKKSMDHFTSDRFVEFLAMQDLLASALEQDYATHDARDALLSALQNAGYTNVVARERRFPNGHDPSIVWLNLSEAPISEKLTELKRYLLVGHRSDDTADITHNVHQHVFEVLKTMSVQFSKTTNAYNRARFEVNHKVIWNAEYGRGPQQNAELEALVLFLNRQSLEIENILHRTTSPVVVTSWKPDVPPAAPEIKEEEPTHAIATPITEAPSHVTPVEVVNLPPTRSYWAETLVGILTAILGTVFAFLTRALIRAKRLRRKSTFPWVTLNSGDDDDDQSGGGGGGPQTPGGQPPVPHTRGTHQSRFSVQDIASDTSLLSVDLDEDTLSQYDETFQKIRRALFETSFADILQNSARWISTLEAMALADGNAPYTLLAQYLNGIEEAYTNFRNTGHISRATLSGFFALEDNLRAAGIAFGTTTPTQTIQNQFADSPARRWKTRFEQIACELGDASIKSLADLADIIDTERERGDLTQFDVLAASSISSLCRAVRIISDTTDPNAQLALVENATAMQNNINAILGTNVSIPFLSATRRLLITRRVQEAGAESRSGATPETVQQLADAELAKIVSEANMYNEMAASQRDIANATREATIREHVLSPVNALANVGMAAAFFRSGGLRSRAFNPAMPTMPGGPAAAGRPMFQAFRGRGHRLNR.

Positions 109-229 (TAEFKSGFCY…GCEYMLYPVG (121 aa)) constitute a Peptidase C6 domain. Catalysis depends on for helper component proteinase activity residues Cys117 and His189. The tract at residues 502-539 (WVTLNSGDDDDDQSGGGGGGPQTPGGQPPVPHTRGTHQ) is disordered. Over residues 515–524 (SGGGGGGPQT) the composition is skewed to gly residues.

This sequence belongs to the bymoviruses polyprotein 2 family. Post-translationally, the viral RNA2 of bymoviruses is expressed as a single polyprotein which undergoes post-translational proteolytic processing resulting in the production of at least two individual proteins. The HC-pro cleaves its C-terminus autocatalytically (Potential).

It carries out the reaction Hydrolyzes a Gly-|-Gly bond at its own C-terminus, commonly in the sequence -Tyr-Xaa-Val-Gly-|-Gly, in the processing of the potyviral polyprotein.. This Barley mild mosaic virus (strain ASL) (BaMMV) protein is Genome polyprotein 2 (RNA2).